A 189-amino-acid polypeptide reads, in one-letter code: Glucose-6-phosphate isomerase (189 aa).

Residues histidine 88, histidine 90, glutamate 97, and histidine 136 each coordinate Fe cation.

This sequence belongs to the archaeal-type GPI family. In terms of assembly, homodimer. It depends on Fe cation as a cofactor.

The protein resides in the cytoplasm. The catalysed reaction is alpha-D-glucose 6-phosphate = beta-D-fructose 6-phosphate. It functions in the pathway carbohydrate degradation; glycolysis; D-glyceraldehyde 3-phosphate and glycerone phosphate from D-glucose: step 2/4. With respect to regulation, inhibited by mannose 6-phosphate, fructose 1-phosphate and fructose 1,6-bisphosphate. The protein is Glucose-6-phosphate isomerase (pgiA) of Pyrococcus furiosus (strain ATCC 43587 / DSM 3638 / JCM 8422 / Vc1).